A 493-amino-acid chain; its full sequence is Keratin, type II cuticular Hb3 (493 aa).

Residues 1 to 111 form a head region; sequence MTCGFSTVGS…PNAQCVKQEE (111 aa). The region spanning 111 to 422 is the IF rod domain; it reads EKEQIKCLNN…RLLEGEEQRL (312 aa). The interval 112 to 146 is coil 1A; the sequence is KEQIKCLNNRFAAFIDKVRFLEQQNKLLETKLQFY. Residues 147 to 156 are linker 1; the sequence is QNRQCCESNL. Residues 157-257 form a coil 1B region; sequence EPLFEGYIET…YEEEIRVLQA (101 aa). A Glycyl lysine isopeptide (Lys-Gly) (interchain with G-Cter in SUMO1) cross-link involves residue Lys-217. A linker 12 region spans residues 258–274; the sequence is NISDTSVIVKMDNSRGL. The interval 275–418 is coil 2; the sequence is NMDNIVAEIK…ATYRRLLEGE (144 aa). The tract at residues 419-493 is tail; the sequence is EQRLCEGVGA…GGGSCSLGRC (75 aa).

Belongs to the intermediate filament family. In terms of assembly, heterotetramer of two type I and two type II keratins.

In Bos taurus (Bovine), this protein is Keratin, type II cuticular Hb3.